The sequence spans 652 residues: Fimbrin-4 (652 aa).

Calponin-homology (CH) domains are found at residues 116 to 233 (ESEK…KIQL), 261 to 364 (LAPE…HHRN), 388 to 494 (SREE…RYTM), and 509 to 617 (DITE…NWSL). 2 actin-binding regions span residues 116-364 (ESEK…HHRN) and 388-617 (SREE…NWSL). Positions 623-652 (TESTVSDDTDVSSVTEEISNLSTDDGSSDV) are disordered. Positions 640–652 (ISNLSTDDGSSDV) are enriched in polar residues.

As to quaternary structure, interacts with F-actin.

The protein localises to the cytoplasm. Its subcellular location is the cytoskeleton. Functionally, cross-links actin filaments (F-actin). Stabilizes and prevents F-actin depolymerization mediated by profilin. May regulate actin cytoarchitecture, cell cycle, cell division, cell elongation and cytoplasmic tractus. This Arabidopsis thaliana (Mouse-ear cress) protein is Fimbrin-4.